Here is a 50-residue protein sequence, read N- to C-terminus: Protein PndA (50 aa).

The helical transmembrane segment at 5–25 (TFLMMLIVVCVTILCFVWMVR) threads the bilayer.

The protein belongs to the Hok/Gef family.

It localises to the cell inner membrane. When overexpressed kill the cells from the inside by interfering with a vital function in the cell membrane. In terms of biological role, toxic component of a type I toxin-antitoxin (TA) system. When expressed is involved in cellular Mg(2+) release and degradation of stable RNA. The polypeptide is Protein PndA (pndA) (Escherichia coli).